Consider the following 623-residue polypeptide: Chaperone protein DnaK (623 aa).

Thr-197 bears the Phosphothreonine; by autocatalysis mark. Positions 595 to 615 are enriched in basic and acidic residues; it reads AENMYKKDEPNTANDKKKKDD. The interval 595–623 is disordered; it reads AENMYKKDEPNTANDKKKKDDDVIDAEVE.

This sequence belongs to the heat shock protein 70 family.

Acts as a chaperone. This Campylobacter jejuni subsp. doylei (strain ATCC BAA-1458 / RM4099 / 269.97) protein is Chaperone protein DnaK.